Consider the following 195-residue polypeptide: Imidazoleglycerol-phosphate dehydratase (195 aa).

It belongs to the imidazoleglycerol-phosphate dehydratase family.

The protein localises to the cytoplasm. It carries out the reaction D-erythro-1-(imidazol-4-yl)glycerol 3-phosphate = 3-(imidazol-4-yl)-2-oxopropyl phosphate + H2O. The protein operates within amino-acid biosynthesis; L-histidine biosynthesis; L-histidine from 5-phospho-alpha-D-ribose 1-diphosphate: step 6/9. The sequence is that of Imidazoleglycerol-phosphate dehydratase from Polynucleobacter asymbioticus (strain DSM 18221 / CIP 109841 / QLW-P1DMWA-1) (Polynucleobacter necessarius subsp. asymbioticus).